The following is a 305-amino-acid chain: MVDVDSFVEDARAEISEALGDETAIIALSGGVDSSTAAALAYEAVGDQLVPVYVDTGLMRKGETDEIREVFDYMDSLRVVDASDRFFDELAGVTDPEEKRHAIGEQFIREFETVAEEVDATQLVQGTIYPDRIESEGTIKSHHNVGGLPERVGFEGIVEPMRDLYKDEVREVARHLGLEEIISERMPFPGPGLAVRVIGEVTPEKVAVCREATHIVEDELEAYEPWQAFAAVLGRATGVKGDNRVHGHVVAVRSVESRDGMTARAQELEWETLQRLQSRIAGTIDEVSRVVYDVTHKPPATIEYE.

In terms of domain architecture, GMPS ATP-PPase spans 2-185; that stretch reads VDVDSFVEDA…LGLEEIISER (184 aa). 29 to 35 is a binding site for ATP; it reads SGGVDSS.

Heterodimer composed of a glutamine amidotransferase subunit (A) and a GMP-binding subunit (B).

The enzyme catalyses XMP + L-glutamine + ATP + H2O = GMP + L-glutamate + AMP + diphosphate + 2 H(+). The protein operates within purine metabolism; GMP biosynthesis; GMP from XMP (L-Gln route): step 1/1. Functionally, catalyzes the synthesis of GMP from XMP. In Halobacterium salinarum (strain ATCC 29341 / DSM 671 / R1), this protein is GMP synthase [glutamine-hydrolyzing] subunit B.